The sequence spans 128 residues: Profilin (128 aa).

It belongs to the profilin family.

Functionally, more likely to influence phosphoinositide metabolism than actin assembly. The protein is Profilin of Homo sapiens (Human).